Consider the following 146-residue polypeptide: Probable trivalent organoarsenical cleaving enzyme (146 aa).

A VOC domain is found at 2–118 (KYVHVGVNVV…DGNEWEFFYT (117 aa)). Residues His-5 and His-62 each coordinate Fe(2+). The roxarsone (III) site is built by Cys-95 and Cys-96. Glu-114 is a Fe(2+) binding site.

It to M.tuberculosis Rv2641. The cofactor is Fe(2+).

It catalyses the reaction methylarsonous acid + AH2 + O2 = arsenite + methanol + A + H(+). The catalysed reaction is roxarsone (III) + AH2 + O2 = 4-hydroxy-3-nitrocyclohexa-2,5-dien-1-one + arsenite + A + H(+). It carries out the reaction nitarsone (III) + AH2 + O2 = 4-nitrocyclohexa-2,5-dien-1-one + arsenite + A + H(+). The enzyme catalyses 4-aminophenylarsonous acid + AH2 + O2 = 4-aminocyclohexa-2,5-dien-1-one + arsenite + A. Functionally, nonheme iron-dependent dioxygenase that can break carbon-arsenic bonds, playing a role in the detoxification of environmental organoarsenical compounds. Catalyzes the oxygen-dependent demethylation of highly toxic methylarsonous acid (MAs(III)) to arsenite, which can then be exported out of the cell. Can also cleave the C-As bond in several trivalent aromatic arsenicals, including roxarsone (III), nitarsone (III) and (4-aminophenyl)arsonous acid. Organoarsenical degradation by this enzyme is proposed to have a significant impact on the arsenic biogeocycle that maintains a balance between organic and inorganic species. This is Probable trivalent organoarsenical cleaving enzyme (yqcK) from Bacillus subtilis (strain 168).